A 317-amino-acid chain; its full sequence is tRNA dimethylallyltransferase (317 aa).

14-21 (GPTAVGKT) contacts ATP. 16-21 (TAVGKT) contributes to the substrate binding site. Positions 39–42 (DSMQ) are interaction with substrate tRNA.

This sequence belongs to the IPP transferase family. Monomer. Mg(2+) serves as cofactor.

It carries out the reaction adenosine(37) in tRNA + dimethylallyl diphosphate = N(6)-dimethylallyladenosine(37) in tRNA + diphosphate. Functionally, catalyzes the transfer of a dimethylallyl group onto the adenine at position 37 in tRNAs that read codons beginning with uridine, leading to the formation of N6-(dimethylallyl)adenosine (i(6)A). This is tRNA dimethylallyltransferase from Bacillus thuringiensis subsp. konkukian (strain 97-27).